The following is a 432-amino-acid chain: 23S rRNA (uracil(1939)-C(5))-methyltransferase RlmD (432 aa).

Residues 1-53 enclose the TRAM domain; the sequence is MPIGKIESLDHEARGITRQEGKAIFVDGALPGETVEYASFRRKSKFELAHLVH. Positions 66, 72, 75, and 154 each coordinate [4Fe-4S] cluster. Positions 263, 292, 297, 313, 341, and 362 each coordinate S-adenosyl-L-methionine. Catalysis depends on cysteine 388, which acts as the Nucleophile.

The protein belongs to the class I-like SAM-binding methyltransferase superfamily. RNA M5U methyltransferase family. RlmD subfamily.

The catalysed reaction is uridine(1939) in 23S rRNA + S-adenosyl-L-methionine = 5-methyluridine(1939) in 23S rRNA + S-adenosyl-L-homocysteine + H(+). Functionally, catalyzes the formation of 5-methyl-uridine at position 1939 (m5U1939) in 23S rRNA. This chain is 23S rRNA (uracil(1939)-C(5))-methyltransferase RlmD, found in Dechloromonas aromatica (strain RCB).